The following is a 181-amino-acid chain: Photosystem I assembly protein Ycf4 (181 aa).

Helical transmembrane passes span 19–41 (YFWAVFLCSGGISFLLAGISSYF) and 61–83 (LVMSFYGTLSIALAIYILGTLFW).

Belongs to the Ycf4 family.

The protein resides in the plastid. The protein localises to the chloroplast thylakoid membrane. Functionally, seems to be required for the assembly of the photosystem I complex. The protein is Photosystem I assembly protein Ycf4 of Trieres chinensis (Marine centric diatom).